A 940-amino-acid polypeptide reads, in one-letter code: UvrABC system protein A (940 aa).

An ATP-binding site is contributed by G31–S38. The segment at C252–C279 adopts a C4-type zinc-finger fold. ABC transporter domains lie at W309–L586 and R606–K936. Position 639–646 (G639–S646) interacts with ATP. The C4-type zinc finger occupies C739 to C765.

It belongs to the ABC transporter superfamily. UvrA family. Forms a heterotetramer with UvrB during the search for lesions.

It localises to the cytoplasm. Its function is as follows. The UvrABC repair system catalyzes the recognition and processing of DNA lesions. UvrA is an ATPase and a DNA-binding protein. A damage recognition complex composed of 2 UvrA and 2 UvrB subunits scans DNA for abnormalities. When the presence of a lesion has been verified by UvrB, the UvrA molecules dissociate. The protein is UvrABC system protein A of Vibrio vulnificus (strain YJ016).